The primary structure comprises 203 residues: IQ domain-containing protein F3 (203 aa).

Residues 1-12 show a composition bias toward basic and acidic residues; the sequence is MELDQDKKKETP. Residues 1-111 form a disordered region; the sequence is MELDQDKKKE…CETQEADRSE (111 aa). The stretch at 13-82 forms a coiled coil; it reads EETENVNEVQ…EADKAILERS (70 aa). Acidic residues predominate over residues 29–38; that stretch reads DEETEAEAEE. A compositionally biased stretch (basic and acidic residues) spans 39-51; that stretch reads ADKAILERSDSVK. The span at 64–73 shows a compositional bias: acidic residues; that stretch reads DEETEAEAEE. Composition is skewed to basic and acidic residues over residues 74–86 and 96–111; these read ADKA…DSVK and QIQE…DRSE. The IQ domain occupies 129 to 158; sequence VMLAGVKIQAWWRGTLVRRTLLLAALNAWT.

This Mus musculus (Mouse) protein is IQ domain-containing protein F3 (Iqcf3).